A 930-amino-acid chain; its full sequence is Isoleucine--tRNA ligase (930 aa).

A 'HIGH' region motif is present at residues 57-67; that stretch reads PYANGNIHVGH. E554 contacts L-isoleucyl-5'-AMP. The 'KMSKS' region signature appears at 595 to 599; the sequence is KMSKS. Position 598 (K598) interacts with ATP. Zn(2+) contacts are provided by C888, C891, C908, and C911.

It belongs to the class-I aminoacyl-tRNA synthetase family. IleS type 1 subfamily. In terms of assembly, monomer. It depends on Zn(2+) as a cofactor.

Its subcellular location is the cytoplasm. The catalysed reaction is tRNA(Ile) + L-isoleucine + ATP = L-isoleucyl-tRNA(Ile) + AMP + diphosphate. Functionally, catalyzes the attachment of isoleucine to tRNA(Ile). As IleRS can inadvertently accommodate and process structurally similar amino acids such as valine, to avoid such errors it has two additional distinct tRNA(Ile)-dependent editing activities. One activity is designated as 'pretransfer' editing and involves the hydrolysis of activated Val-AMP. The other activity is designated 'posttransfer' editing and involves deacylation of mischarged Val-tRNA(Ile). The polypeptide is Isoleucine--tRNA ligase (Streptococcus pneumoniae (strain P1031)).